We begin with the raw amino-acid sequence, 331 residues long: Phosphoribosylformylglycinamidine cyclo-ligase (331 aa).

It belongs to the AIR synthase family.

The protein localises to the cytoplasm. The catalysed reaction is 2-formamido-N(1)-(5-O-phospho-beta-D-ribosyl)acetamidine + ATP = 5-amino-1-(5-phospho-beta-D-ribosyl)imidazole + ADP + phosphate + H(+). Its pathway is purine metabolism; IMP biosynthesis via de novo pathway; 5-amino-1-(5-phospho-D-ribosyl)imidazole from N(2)-formyl-N(1)-(5-phospho-D-ribosyl)glycinamide: step 2/2. In Clostridium botulinum (strain Okra / Type B1), this protein is Phosphoribosylformylglycinamidine cyclo-ligase.